Consider the following 422-residue polypeptide: Lactoyl-CoA dehydratase subunit alpha (422 aa).

This sequence belongs to the FldB/FldC dehydratase alpha/beta subunit family. Heterodimer of an alpha (LcdA) and a beta (LcdB) subunit. Requires [4Fe-4S] cluster as cofactor. FMN serves as cofactor. The cofactor is riboflavin. It depends on Mg(2+) as a cofactor.

It catalyses the reaction (R)-lactoyl-CoA = acryloyl-CoA + H2O. It carries out the reaction (2R)-hydroxybutanoyl-CoA = (2E)-butenoyl-CoA + H2O. With respect to regulation, activated by the LcdC protein. Functionally, involved in the acrylate pathway for the conversion of D-lactic acid to propionic acid. Catalyzes the reversible dehydration of Lactoyl-CoA and 2-hydroxybutyroyl-CoA to acryloyl-CoA and crotonyl-CoA, respectively. This is Lactoyl-CoA dehydratase subunit alpha (lcdA) from Anaerotignum propionicum (Clostridium propionicum).